Consider the following 274-residue polypeptide: Momilactone A synthase (274 aa).

Belongs to the short-chain dehydrogenases/reductases (SDR) family.

It carries out the reaction 3beta-hydroxy-9beta-pimara-7,15-dien-19,6beta-olide + NAD(+) = momilactone A + NADH + H(+). The catalysed reaction is 3beta-hydroxy-9beta-pimara-7,15-dien-19,6beta-olide + NADP(+) = momilactone A + NADPH + H(+). Involved in momilactone phytoalexins biosynthesis. Catalyzes the last step of momilactone A biosynthesis. The protein is Momilactone A synthase of Oryza sativa subsp. japonica (Rice).